We begin with the raw amino-acid sequence, 415 residues long: MKMSAASDHLLAAQETQMQCIEKDSRLLQDHACYWGAVRREKLLLYAARTKGLKTIGCVPVPPCSVTAEQAKQAICMQLIVEELLHSPWAKEPWSLTDLSWERYQAAPKGCLKKGARVVEVEYDGNSSNKTWYTAWSTVYVRGTEEEGWETAVCAADGQGIYYCAGMSSKVYFETFETDARRWSRTGHWTVRDNDVIYHSTFGAPPHSRNDRDCIEGFWSDAGERRGSRGSDTTDRALPYPAARQSPICRPVRTGENRSRAVHRQAPYSAPSSPGSSVGPDSPSESSRQVPLVLLPGPSDPAPPSPDSTDVIAEGDKEPERFSILSKPGGQPCLILSGNGNQAKCYRFRCKRYFREHYQHITTTWWTVGERGSERHGDACVLVTFKDSSQRGVFLKRVPLPPGMRAQALTMIADF.

Residues 1–205 form a transactivation domain region; that stretch reads MKMSAASDHL…VIYHSTFGAP (205 aa). Residues 221–313 form a disordered region; sequence DAGERRGSRG…PSPDSTDVIA (93 aa). The segment covering 222-235 has biased composition (basic and acidic residues); the sequence is AGERRGSRGSDTTD. The span at 267–287 shows a compositional bias: low complexity; the sequence is PYSAPSSPGSSVGPDSPSESS. The tract at residues 330–415 is DNA-binding domain; sequence GQPCLILSGN…AQALTMIADF (86 aa).

This sequence belongs to the papillomaviridae E2 protein family. As to quaternary structure, binds DNA as homodimer. Interacts with protein E1; this interaction greatly increases E1 DNA-binding activity. Interacts with protein L1; this interaction enhances E2-dependent replication and transcription activation. Interacts with protein L2; this interaction inhibits E2 transcriptional activity but not DNA replication function E2. Interacts with protein E7; this interaction inhibits E7 oncogenic activity. Interacts with host TAF1; this interaction modulates E2-dependent transcriptional regulation. Interacts with host BRD4; this interaction mediates E2 transcriptional activation function. Additionally, the interaction with host BRD4 on mitotic chromosomes mediates tethering of the viral genome. Interacts with host TOPBP1; this interaction is required for optimal viral DNA replication. Post-translationally, phosphorylated.

The protein localises to the host nucleus. Its function is as follows. Plays a role in the initiation of viral DNA replication. A dimer of E2 interacts with a dimer of E1 in order to improve specificity of E1 DNA binding activity. Once the complex recognizes and binds DNA at specific sites, the E2 dimer is removed from DNA. E2 also regulates viral transcription through binding to the E2RE response element (5'-ACCNNNNNNGGT-3') present in multiple copies in the regulatory regions of the viral genome. Activates or represses transcription depending on E2RE's position with regards to proximal promoter elements including the TATA-box. Repression occurs by sterically hindering the assembly of the transcription initiation complex. This is Regulatory protein E2 from European elk papillomavirus (EEPV).